Reading from the N-terminus, the 255-residue chain is tRNA pseudouridine synthase B (255 aa).

Catalysis depends on aspartate 58, which acts as the Nucleophile.

The protein belongs to the pseudouridine synthase TruB family. Type 1 subfamily.

The catalysed reaction is uridine(55) in tRNA = pseudouridine(55) in tRNA. Functionally, responsible for synthesis of pseudouridine from uracil-55 in the psi GC loop of transfer RNAs. The protein is tRNA pseudouridine synthase B of Chlorobium chlorochromatii (strain CaD3).